Reading from the N-terminus, the 780-residue chain is Striatin (780 aa).

Positions 53 to 120 (LHFLQHEWAR…QERAKYHKLK (68 aa)) form a coiled coil. The caveolin-binding stretch occupies residues 55–63 (FLQHEWARF). A disordered region spans residues 124–145 (ELNQGDMKPPSYDSDEGNETEV). At S137 the chain carries Phosphoserine. Residues 149 to 166 (QNSQFMWKQGRQLLRQYL) form a calmodulin-binding region. The residue at position 225 (T225) is a Phosphothreonine. Residues S227, S229, S245, and S259 each carry the phosphoserine modification. Disordered stretches follow at residues 290 to 321 (FLVASEEGDNESRSAGDGTDWEKEDQCLTPER), 334 to 353 (EQYKKERKGKKGVKRPNRSK), and 363 to 388 (DVDELPSLQPSVGSPSRPSSSRLPEQ). Residues 299–315 (NESRSAGDGTDWEKEDQ) are compositionally biased toward basic and acidic residues. Over residues 338–351 (KERKGKKGVKRPNR) the composition is skewed to basic residues. 6 WD repeats span residues 461-500 (SHFDGIRALAFHPIEPVLITASEDHTLKMWNLQKTAPAKK), 514-553 (AHKGPVLCVVMSSNGEQCYSGGTDGLIQSWSTTNPNVDPY), 567-606 (GHTDAVWGLAYSAAHQRLLSCSADGTLRLWTTTEVAPALT), 662-701 (SSSCQINRVISHPTLPISITAHEDRHIKFYDNNTGKLIHS), 704-743 (AHLEAVTSLAVDPNGLYLMSGSHDCSIRLWNLESKTCIQE), and 750-780 (KFEESIHDVAFHPSKCYIASAGADALAKVFV).

It belongs to the WD repeat striatin family. In terms of assembly, part of the core of STRIPAK complexes composed of PP2A catalytic and scaffolding subunits, the striatins (PP2A regulatory subunits), the striatin-associated proteins MOB4, STRIP1 and STRIP2, PDCD10 and members of the STE20 kinases, such as STK24 and STK26. Interacts with CTTNBP2; this interaction may regulate dendritic spine distribution of STRN. Activation of glutamate receptors weakens the interaction with CTTNBP2. As to expression, mainly expressed in the central nervous system. Mostly confined in dendrites, not in axons, and is most abundant in dendritic spines.

The protein localises to the cytoplasm. It is found in the membrane. The protein resides in the cell projection. It localises to the dendritic spine. In terms of biological role, calmodulin-binding scaffolding protein which is the center of the striatin-interacting phosphatase and kinase (STRIPAK) complexes. STRIPAK complexes have critical roles in protein (de)phosphorylation and are regulators of multiple signaling pathways including Hippo, MAPK, nuclear receptor and cytoskeleton remodeling. Different types of STRIPAK complexes are involved in a variety of biological processes such as cell growth, differentiation, apoptosis, metabolism and immune regulation. This Rattus norvegicus (Rat) protein is Striatin (Strn).